Reading from the N-terminus, the 633-residue chain is Threonine--tRNA ligase (633 aa).

Positions 1-61 (MINIYFNNNL…TENCTFEVIT (61 aa)) constitute a TGS domain. The interval 242-533 (DHRKIGKELE…LIEHHSGKFP (292 aa)) is catalytic. Positions 333, 384, and 510 each coordinate Zn(2+).

Belongs to the class-II aminoacyl-tRNA synthetase family. As to quaternary structure, homodimer. The cofactor is Zn(2+).

It is found in the cytoplasm. The catalysed reaction is tRNA(Thr) + L-threonine + ATP = L-threonyl-tRNA(Thr) + AMP + diphosphate + H(+). Catalyzes the attachment of threonine to tRNA(Thr) in a two-step reaction: L-threonine is first activated by ATP to form Thr-AMP and then transferred to the acceptor end of tRNA(Thr). Also edits incorrectly charged L-seryl-tRNA(Thr). The polypeptide is Threonine--tRNA ligase (Ehrlichia canis (strain Jake)).